A 345-amino-acid chain; its full sequence is Adenosine kinase 2 (345 aa).

Aspartate 300 is a catalytic residue.

This sequence belongs to the carbohydrate kinase PfkB family. Interacts with the begomovirus AL2 protein and the curtovirus L2 protein. Interacts with KIN11. Mg(2+) is required as a cofactor. Post-translationally, phosphorylated by KIN11. In terms of tissue distribution, widely expressed.

It localises to the cytoplasm. The catalysed reaction is adenosine + ATP = AMP + ADP + H(+). It functions in the pathway purine metabolism; AMP biosynthesis via salvage pathway; AMP from adenosine: step 1/1. Inactivated by the begomovirus AL2 protein or the curtovirus L2 protein. ATP dependent phosphorylation of adenosine and other related nucleoside analogs to monophosphate derivatives. Essential to sustain methyl recycling. This Arabidopsis thaliana (Mouse-ear cress) protein is Adenosine kinase 2.